A 423-amino-acid polypeptide reads, in one-letter code: MTGPDNSLTDPSASPSTPVASLRPTAEQLLPQQRDQLHAFIERVLADHPDHIVDCCVEYYTNTLPNGTAAYGDLLALLAATSADADAFTAAVTAIQSPLLSGDGPTDGPPAQESVTAHARVVAEDMSALRGRVAADDATATGSEATADEAAAVAELIERAREMNQNMEEIDRLAAQQSDNTDNLKAEISDISSAIEQIAASATEVNDRSDEAQSLATDGYERAVAVVEQVEAIHDGVTEVRHQTATLQDHTEAIDDIVEVINDIADQTNLLALNASIEAARADAGGEGFAVVADEVKSLAEESKTQAEEIEERVENIQVETRNAADTLVELETETEDSLEASTSSLDTFEEIKDLVTGVSTSLDEIKSGTERQTESSEELTMMIDEAARKADTISDEVASMADANHAQLQKLEAYQSESDQSR.

The segment covering 1–19 (MTGPDNSLTDPSASPSTPV) has biased composition (polar residues). A disordered region spans residues 1–21 (MTGPDNSLTDPSASPSTPVAS). In terms of domain architecture, Methyl-accepting transducer spans 152 to 388 (AVAELIERAR…ELTMMIDEAA (237 aa)).

It belongs to the methyl-accepting chemotaxis (MCP) protein family. In terms of processing, methylated by CheR.

It localises to the cytoplasm. Its function is as follows. Potentially involved in chemo- or phototactic signal transduction. In Halobacterium salinarum (strain ATCC 29341 / DSM 671 / R1), this protein is Transducer protein Htr13 (htr13).